Consider the following 456-residue polypeptide: Protein MGA1 (456 aa).

A DNA-binding region spans residues 3–118 (PKTFVHQLHA…ILNKIQRKST (116 aa)). Residues 229 to 299 (SIVQPQQPQQ…QPLPTVPPYS (71 aa)) are disordered. Low complexity-rich tracts occupy residues 231–246 (VQPQQPQQVLSPQALS), 253–267 (SGTLSSTDDLKTTSL), and 283–299 (QQQQQQQQPLPTVPPYS).

This sequence belongs to the HSF family.

It localises to the nucleus. The chain is Protein MGA1 (MGA1) from Saccharomyces cerevisiae (strain ATCC 204508 / S288c) (Baker's yeast).